The sequence spans 407 residues: RING finger protein 44 (407 aa).

The tract at residues 26–58 (LSSSPGQLWGRPSNLSVEEHRASAPAGRSPRML) is disordered. An RING-type; atypical zinc finger spans residues 355-396 (CVVCFSDFEVRQLLRVLPCNHEFHAKCVDKWLKANRTCPICR).

In Mus musculus (Mouse), this protein is RING finger protein 44 (Rnf44).